We begin with the raw amino-acid sequence, 256 residues long: Short chain dehydrogenase adrF (256 aa).

NADP(+) contacts are provided by Ile-11, Asp-57, Arg-119, Tyr-151, Lys-155, and Val-184. Tyr-151 acts as the Proton acceptor in catalysis. Lys-155 acts as the Lowers pKa of active site Tyr in catalysis.

This sequence belongs to the short-chain dehydrogenases/reductases (SDR) family.

The protein operates within secondary metabolite biosynthesis; terpenoid biosynthesis. Functionally, short chain dehydrogenase; part of the gene cluster that mediates the biosynthesis of andrastins, meroterpenoid compounds that exhibit inhibitory activity against ras farnesyltransferase, suggesting that they could be promising leads for antitumor agents. The first step of the pathway is the synthesis of 3,5-dimethylorsellinic acid (DMOA) by the polyketide synthase adrD via condensation of one acetyl-CoA starter unit with 3 malonyl-CoA units and 2 methylations. DMAO is then converted to farnesyl-DMAO by the prenyltransferase adrG. The methyltransferase adrK catalyzes the methylation of the carboxyl group of farnesyl-DMAO to farnesyl-DMAO methyl ester which is further converted to epoxyfarnesyl-DMAO methyl ester by the FAD-dependent monooxygenase adrH. The terpene cyclase adrI then catalyzes the carbon skeletal rearrangement to generate the andrastin E, the first compound in the pathway having the andrastin scaffold, with the tetracyclic ring system. The post-cyclization tailoring enzymes adrF, adrE, adrJ, and adrA, are involved in the conversion of andrastin E into andrastin A. The short chain dehydrogenase adrF is responsible for the oxidation of the C-3 a hydroxyl group of andrastin E to yield the corresponding ketone, andrastin D. The ketoreductase adrE stereoselectively reduces the carbonyl moiety to reverse the stereochemistry of the C-3 position to yield andrastin F. The acetyltransferase adrJ is the acetyltransferase that attaches the acetyl group to the C-3 hydroxyl group of andrastin F to yield andrastin C. Finally, the cytochrome P450 monooxygenase adrA catalyzes two sequential oxidation reactions of the C-23 methyl group, to generate the corresponding alcohol andrastin B, and aldehyde andrastin A. The sequence is that of Short chain dehydrogenase adrF from Penicillium roqueforti.